Consider the following 353-residue polypeptide: MIDADRLITAVGGRDRDEQLDRAIRPLSLADYIGQPTVREQMELFIQAARGRSEALDHTLIFGPPGLGKTTLANIIAQEMGVSIKSTSGPVLERPGDLAAILTNLEPNDVLFIDEIHRLSPIVEEVLYPAMEDFQLDIMIGEGPAARSIKLDLPPFTLVGATTRAGMLTNPLRDRFGIVQRLEFYNIADLSTIVARSAGILGLVIEPAGAFEIARRARGTPRIANRLLRRVRDFAQVRGNGQITRQTADKALNLLDVDEHGFDHQDRRLLLTMIEKFDGGPVGVDSLAAAISEERHTIEDVLEPYLIQQGYIMRTPRGRVVTRHAYLHFGLNIPTRMGEMPVAGEFVDDAADL.

The tract at residues 4–185 (ADRLITAVGG…FGIVQRLEFY (182 aa)) is large ATPase domain (RuvB-L). ATP-binding positions include isoleucine 24, arginine 25, glycine 66, lysine 69, threonine 70, threonine 71, 132–134 (EDF), arginine 175, tyrosine 185, and arginine 222. Position 70 (threonine 70) interacts with Mg(2+). The segment at 186-256 (NIADLSTIVA…TADKALNLLD (71 aa)) is small ATPAse domain (RuvB-S). The interval 259–353 (EHGFDHQDRR…GEFVDDAADL (95 aa)) is head domain (RuvB-H). 3 residues coordinate DNA: arginine 295, arginine 314, and arginine 319.

The protein belongs to the RuvB family. Homohexamer. Forms an RuvA(8)-RuvB(12)-Holliday junction (HJ) complex. HJ DNA is sandwiched between 2 RuvA tetramers; dsDNA enters through RuvA and exits via RuvB. An RuvB hexamer assembles on each DNA strand where it exits the tetramer. Each RuvB hexamer is contacted by two RuvA subunits (via domain III) on 2 adjacent RuvB subunits; this complex drives branch migration. In the full resolvosome a probable DNA-RuvA(4)-RuvB(12)-RuvC(2) complex forms which resolves the HJ.

It localises to the cytoplasm. It catalyses the reaction ATP + H2O = ADP + phosphate + H(+). The RuvA-RuvB-RuvC complex processes Holliday junction (HJ) DNA during genetic recombination and DNA repair, while the RuvA-RuvB complex plays an important role in the rescue of blocked DNA replication forks via replication fork reversal (RFR). RuvA specifically binds to HJ cruciform DNA, conferring on it an open structure. The RuvB hexamer acts as an ATP-dependent pump, pulling dsDNA into and through the RuvAB complex. RuvB forms 2 homohexamers on either side of HJ DNA bound by 1 or 2 RuvA tetramers; 4 subunits per hexamer contact DNA at a time. Coordinated motions by a converter formed by DNA-disengaged RuvB subunits stimulates ATP hydrolysis and nucleotide exchange. Immobilization of the converter enables RuvB to convert the ATP-contained energy into a lever motion, pulling 2 nucleotides of DNA out of the RuvA tetramer per ATP hydrolyzed, thus driving DNA branch migration. The RuvB motors rotate together with the DNA substrate, which together with the progressing nucleotide cycle form the mechanistic basis for DNA recombination by continuous HJ branch migration. Branch migration allows RuvC to scan DNA until it finds its consensus sequence, where it cleaves and resolves cruciform DNA. This is Holliday junction branch migration complex subunit RuvB from Pseudomonas syringae pv. tomato (strain ATCC BAA-871 / DC3000).